Here is a 119-residue protein sequence, read N- to C-terminus: Ribonuclease P protein component (119 aa).

Belongs to the RnpA family. In terms of assembly, consists of a catalytic RNA component (M1 or rnpB) and a protein subunit.

It carries out the reaction Endonucleolytic cleavage of RNA, removing 5'-extranucleotides from tRNA precursor.. RNaseP catalyzes the removal of the 5'-leader sequence from pre-tRNA to produce the mature 5'-terminus. It can also cleave other RNA substrates such as 4.5S RNA. The protein component plays an auxiliary but essential role in vivo by binding to the 5'-leader sequence and broadening the substrate specificity of the ribozyme. The chain is Ribonuclease P protein component from Streptococcus equi subsp. equi (strain 4047).